Consider the following 466-residue polypeptide: UDP-N-acetylmuramoylalanine--D-glutamate ligase (466 aa).

121 to 127 (GTNGKST) provides a ligand contact to ATP.

It belongs to the MurCDEF family.

It localises to the cytoplasm. The catalysed reaction is UDP-N-acetyl-alpha-D-muramoyl-L-alanine + D-glutamate + ATP = UDP-N-acetyl-alpha-D-muramoyl-L-alanyl-D-glutamate + ADP + phosphate + H(+). It participates in cell wall biogenesis; peptidoglycan biosynthesis. In terms of biological role, cell wall formation. Catalyzes the addition of glutamate to the nucleotide precursor UDP-N-acetylmuramoyl-L-alanine (UMA). The chain is UDP-N-acetylmuramoylalanine--D-glutamate ligase from Nitrobacter hamburgensis (strain DSM 10229 / NCIMB 13809 / X14).